A 102-amino-acid polypeptide reads, in one-letter code: Acid shock protein (102 aa).

A signal peptide spans 1-21; the sequence is MKKVLALVVAAAMGLSSAAFA. Residues 22–41 are compositionally biased toward low complexity; it reads AETATTPAPTATTTKAAPAK. The propeptide occupies 22-58; that stretch reads AETATTPAPTATTTKAAPAKTTHHKKQHKAAPAQKAQ. Positions 22 to 102 are disordered; sequence AETATTPAPT…PAKPAAQPAA (81 aa). Residues 80 to 90 are compositionally biased toward basic residues; it reads AAKKHAKKHSH. Residues 91 to 102 are compositionally biased toward low complexity; sequence QQPAKPAAQPAA.

This sequence belongs to the Asr family. In terms of processing, proteolytic processing gives rise to the active protein.

Its subcellular location is the periplasm. Functionally, required for growth and/or survival at acidic conditions. This is Acid shock protein from Escherichia coli O17:K52:H18 (strain UMN026 / ExPEC).